We begin with the raw amino-acid sequence, 357 residues long: tRNA N6-adenosine threonylcarbamoyltransferase (357 aa).

Residues His-115 and His-119 each coordinate Fe cation. Residues 137–141, Asp-170, Gly-183, and Asn-281 contribute to the substrate site; that span reads LASGG. Asp-309 lines the Fe cation pocket.

Belongs to the KAE1 / TsaD family. It depends on Fe(2+) as a cofactor.

It is found in the cytoplasm. The catalysed reaction is L-threonylcarbamoyladenylate + adenosine(37) in tRNA = N(6)-L-threonylcarbamoyladenosine(37) in tRNA + AMP + H(+). In terms of biological role, required for the formation of a threonylcarbamoyl group on adenosine at position 37 (t(6)A37) in tRNAs that read codons beginning with adenine. Is involved in the transfer of the threonylcarbamoyl moiety of threonylcarbamoyl-AMP (TC-AMP) to the N6 group of A37, together with TsaE and TsaB. TsaD likely plays a direct catalytic role in this reaction. This is tRNA N6-adenosine threonylcarbamoyltransferase from Nitrobacter winogradskyi (strain ATCC 25391 / DSM 10237 / CIP 104748 / NCIMB 11846 / Nb-255).